Consider the following 86-residue polypeptide: Large ribosomal subunit protein uL24 (86 aa).

Belongs to the universal ribosomal protein uL24 family. Part of the 50S ribosomal subunit.

Functionally, one of two assembly initiator proteins, it binds directly to the 5'-end of the 23S rRNA, where it nucleates assembly of the 50S subunit. In terms of biological role, one of the proteins that surrounds the polypeptide exit tunnel on the outside of the subunit. The polypeptide is Large ribosomal subunit protein uL24 (Bdellovibrio bacteriovorus (strain ATCC 15356 / DSM 50701 / NCIMB 9529 / HD100)).